Here is a 172-residue protein sequence, read N- to C-terminus: Ribosome maturation factor RimM (172 aa).

One can recognise a PRC barrel domain in the interval 96–170 (EENEFYFHEI…KITIEVMEGL (75 aa)).

The protein belongs to the RimM family. Binds ribosomal protein uS19.

The protein localises to the cytoplasm. An accessory protein needed during the final step in the assembly of 30S ribosomal subunit, possibly for assembly of the head region. Essential for efficient processing of 16S rRNA. May be needed both before and after RbfA during the maturation of 16S rRNA. It has affinity for free ribosomal 30S subunits but not for 70S ribosomes. This is Ribosome maturation factor RimM from Listeria monocytogenes serotype 4b (strain CLIP80459).